Here is a 604-residue protein sequence, read N- to C-terminus: Testis-expressed protein 13C-1 (604 aa).

Disordered stretches follow at residues 314–337 (EGEGPEKPQGTSLHGDSSNNSHKD), 374–397 (PVMPKGISSQGNKTSSTKKKRPKI), 485–523 (CLNAGVSPNEKKMPQGTGKNQSQRQKEEPNSFQANHPRK), and 538–580 (ATKQ…SANC). Over residues 322-333 (QGTSLHGDSSNN) the composition is skewed to polar residues. The segment covering 544-572 (KQPEGIKSLESKQPQETKSSESKQQEKPL) has biased composition (basic and acidic residues).

Belongs to the TEX13 family.

In terms of biological role, plays a role in transcriptional repression. This is Testis-expressed protein 13C-1 from Mus musculus (Mouse).